The following is an 84-amino-acid chain: Replication regulatory protein repA2 (84 aa).

The span at 1–13 (MSQTENAVTSSSG) shows a compositional bias: polar residues. Positions 1-31 (MSQTENAVTSSSGAKRAYRKGNPLSDAEKQR) are disordered.

Functionally, this protein is involved in the determination of copy number in gene replication. It binds to the repA promoter thus inhibiting the synthesis of the mRNA for the initiator protein RepA. This chain is Replication regulatory protein repA2 (repA2), found in Escherichia coli.